Consider the following 150-residue polypeptide: Arginine repressor (150 aa).

It belongs to the ArgR family.

The protein resides in the cytoplasm. It functions in the pathway amino-acid biosynthesis; L-arginine biosynthesis [regulation]. In terms of biological role, regulates arginine biosynthesis genes. This Finegoldia magna (strain ATCC 29328 / DSM 20472 / WAL 2508) (Peptostreptococcus magnus) protein is Arginine repressor.